The following is a 300-amino-acid chain: Estradiol 17-beta-dehydrogenase 11 (300 aa).

The first 18 residues, 1–18 (MKILLDLLLLLPLLIVCC), serve as a signal peptide directing secretion. Residue 40–67 (LITGAGHGIGRLTAYEFAKLKSKLVLWD) coordinates NADP(+). Position 172 (Ser172) interacts with substrate. Tyr185 serves as the catalytic Proton acceptor. NADP(+) is bound at residue Lys189.

It belongs to the short-chain dehydrogenases/reductases (SDR) family. 17-beta-HSD 3 subfamily.

It is found in the endoplasmic reticulum. The protein localises to the lipid droplet. It catalyses the reaction 17beta-estradiol + NAD(+) = estrone + NADH + H(+). It carries out the reaction 17beta-estradiol + NADP(+) = estrone + NADPH + H(+). In terms of biological role, can convert androstan-3-alpha,17-beta-diol (3-alpha-diol) to androsterone in vitro, suggesting that it may participate in androgen metabolism during steroidogenesis. May act by metabolizing compounds that stimulate steroid synthesis and/or by generating metabolites that inhibit it. Has no activity toward DHEA (dehydroepiandrosterone), or A-dione (4-androste-3,17-dione), and only a slight activity toward testosterone to A-dione. The sequence is that of Estradiol 17-beta-dehydrogenase 11 (HSD17B11) from Macaca fascicularis (Crab-eating macaque).